The chain runs to 357 residues: Protein RecA (357 aa).

Gly-67–Thr-74 serves as a coordination point for ATP. Residues Leu-335–Phe-357 are disordered.

The protein belongs to the RecA family.

The protein localises to the cytoplasm. Its function is as follows. Can catalyze the hydrolysis of ATP in the presence of single-stranded DNA, the ATP-dependent uptake of single-stranded DNA by duplex DNA, and the ATP-dependent hybridization of homologous single-stranded DNAs. It interacts with LexA causing its activation and leading to its autocatalytic cleavage. This chain is Protein RecA, found in Shewanella sp. (strain MR-4).